A 396-amino-acid chain; its full sequence is Transcription factor IIIB 50 kDa subunit (396 aa).

The segment at 3–36 adopts a TFIIB-type zinc-finger fold; sequence GAKRCPDCGSSEIVEDAHYSQDQLVCADCGCILS. Positions 7, 10, 28, and 31 each coordinate Zn(2+). Copy 2 of the repeat occupies 173–249; that stretch reads VKSHCRSFKL…SRRLSCSLSR (77 aa). Cys342 carries the post-translational modification Cysteine sulfenic acid (-SOH).

The protein belongs to the TFIIB family. As to quaternary structure, component of TFIIIB complexes. Interacts with TBP and forms a ternary complex with TBp and target DNA sequences. In response to oxidative stress, a Cys-residue is reversibly oxidized to cysteine sulfenic acid. This impairs formation of a ternary complex with TBP and DNA and down-regulates expression of target genes in response to oxidative stress.

Its subcellular location is the nucleus. General activator of RNA polymerase III transcription. Factor exclusively required for RNA polymerase III transcription of genes with promoter elements upstream of the initiation sites. Contributes to the regulation of gene expression; functions as activator in the absence of oxidative stress. Down-regulates expression of target genes in response to oxidative stress. Overexpression protects cells against apoptosis in response to oxidative stress. This chain is Transcription factor IIIB 50 kDa subunit (brf2), found in Xenopus laevis (African clawed frog).